The chain runs to 176 residues: Cytochrome b (176 aa).

A run of 3 helical transmembrane segments spans residues 33 to 53 (FGSL…FLAM), 77 to 98 (WLLR…YLHI), and 113 to 133 (WNVG…GYVL). Histidine 83 and histidine 97 together coordinate heme b.

This sequence belongs to the cytochrome b family. In terms of assembly, the cytochrome bc1 complex contains 11 subunits: 3 respiratory subunits (MT-CYB, CYC1 and UQCRFS1), 2 core proteins (UQCRC1 and UQCRC2) and 6 low-molecular weight proteins (UQCRH/QCR6, UQCRB/QCR7, UQCRQ/QCR8, UQCR10/QCR9, UQCR11/QCR10 and a cleavage product of UQCRFS1). This cytochrome bc1 complex then forms a dimer. Requires heme b as cofactor.

It is found in the mitochondrion inner membrane. Component of the ubiquinol-cytochrome c reductase complex (complex III or cytochrome b-c1 complex) that is part of the mitochondrial respiratory chain. The b-c1 complex mediates electron transfer from ubiquinol to cytochrome c. Contributes to the generation of a proton gradient across the mitochondrial membrane that is then used for ATP synthesis. The polypeptide is Cytochrome b (MT-CYB) (Eumops glaucinus (Wagner's mastiff bat)).